Consider the following 525-residue polypeptide: Anti-silencing protein 2 (525 aa).

The interval 467–525 (LPRVPTDSPQLPSKDKSQETAKKDDRPKLVANEPVTLDTSTPPVAQSLADSKHCSGLHK) is disordered. Positions 479–494 (SKDKSQETAKKDDRPK) are enriched in basic and acidic residues.

In terms of biological role, derepression of silent mating type loci when overexpressed. This chain is Anti-silencing protein 2 (ASF2), found in Saccharomyces cerevisiae (strain ATCC 204508 / S288c) (Baker's yeast).